A 277-amino-acid polypeptide reads, in one-letter code: Large ribosomal subunit protein uL2c (277 aa).

Residues 224–257 form a disordered region; it reads VMNPIDHPHGGGEGRAPIGRKKPLTPWGHPALGR.

Belongs to the universal ribosomal protein uL2 family. As to quaternary structure, part of the 50S ribosomal subunit.

The protein localises to the plastid. It localises to the chloroplast. This Anthoceros angustus (Hornwort) protein is Large ribosomal subunit protein uL2c (rpl2).